The chain runs to 157 residues: Phosphopantetheine adenylyltransferase (157 aa).

Ser-9 lines the substrate pocket. ATP-binding positions include 9–10 and His-17; that span reads SF. Lys-41, Leu-73, and Lys-87 together coordinate substrate. ATP-binding positions include 88–90, Glu-98, and 123–129; these read GLR and YSYLSSS.

This sequence belongs to the bacterial CoaD family. As to quaternary structure, homohexamer. Mg(2+) serves as cofactor.

Its subcellular location is the cytoplasm. It carries out the reaction (R)-4'-phosphopantetheine + ATP + H(+) = 3'-dephospho-CoA + diphosphate. Its pathway is cofactor biosynthesis; coenzyme A biosynthesis; CoA from (R)-pantothenate: step 4/5. Functionally, reversibly transfers an adenylyl group from ATP to 4'-phosphopantetheine, yielding dephospho-CoA (dPCoA) and pyrophosphate. This chain is Phosphopantetheine adenylyltransferase, found in Alkaliphilus metalliredigens (strain QYMF).